The sequence spans 214 residues: Protein DEHYDRATION-INDUCED 19 homolog 5 (214 aa).

Position 110 is a phosphoserine (Ser-110). The segment at 148-185 (PKKSKLVQPDSSSEASMEDNSLIRDSTEKDWESPSPLS) is disordered. Over residues 156 to 166 (PDSSSEASMED) the composition is skewed to polar residues. The span at 168–179 (SLIRDSTEKDWE) shows a compositional bias: basic and acidic residues.

This sequence belongs to the Di19 family. Phosphorylated in vitro by CPK3 or CPK11. Expressed in seedlings, roots, leaves, stems, flowers and siliques.

The protein localises to the nucleus. In Arabidopsis thaliana (Mouse-ear cress), this protein is Protein DEHYDRATION-INDUCED 19 homolog 5 (DI19-5).